The chain runs to 333 residues: 4-hydroxythreonine-4-phosphate dehydrogenase (333 aa).

Residues histidine 133 and threonine 134 each coordinate substrate. Positions 169, 214, and 269 each coordinate a divalent metal cation. 3 residues coordinate substrate: lysine 277, asparagine 286, and arginine 295.

It belongs to the PdxA family. In terms of assembly, homodimer. The cofactor is Zn(2+). Mg(2+) is required as a cofactor. Requires Co(2+) as cofactor.

Its subcellular location is the cytoplasm. The catalysed reaction is 4-(phosphooxy)-L-threonine + NAD(+) = 3-amino-2-oxopropyl phosphate + CO2 + NADH. Its pathway is cofactor biosynthesis; pyridoxine 5'-phosphate biosynthesis; pyridoxine 5'-phosphate from D-erythrose 4-phosphate: step 4/5. Its function is as follows. Catalyzes the NAD(P)-dependent oxidation of 4-(phosphooxy)-L-threonine (HTP) into 2-amino-3-oxo-4-(phosphooxy)butyric acid which spontaneously decarboxylates to form 3-amino-2-oxopropyl phosphate (AHAP). The chain is 4-hydroxythreonine-4-phosphate dehydrogenase from Caulobacter vibrioides (strain ATCC 19089 / CIP 103742 / CB 15) (Caulobacter crescentus).